A 165-amino-acid chain; its full sequence is Probable chemoreceptor glutamine deamidase CheD (165 aa).

The protein belongs to the CheD family.

It catalyses the reaction L-glutaminyl-[protein] + H2O = L-glutamyl-[protein] + NH4(+). Functionally, probably deamidates glutamine residues to glutamate on methyl-accepting chemotaxis receptors (MCPs), playing an important role in chemotaxis. This Clostridium tetani (strain Massachusetts / E88) protein is Probable chemoreceptor glutamine deamidase CheD.